Reading from the N-terminus, the 345-residue chain is Biotin synthase (345 aa).

The region spanning 38–256 (RQVQVSTLLS…IAVARIMMPS (219 aa)) is the Radical SAM core domain. Residues Cys53, Cys57, and Cys60 each contribute to the [4Fe-4S] cluster site. [2Fe-2S] cluster contacts are provided by Cys97, Cys128, Cys188, and Arg260.

Belongs to the radical SAM superfamily. Biotin synthase family. In terms of assembly, homodimer. It depends on [4Fe-4S] cluster as a cofactor. The cofactor is [2Fe-2S] cluster.

The enzyme catalyses (4R,5S)-dethiobiotin + (sulfur carrier)-SH + 2 reduced [2Fe-2S]-[ferredoxin] + 2 S-adenosyl-L-methionine = (sulfur carrier)-H + biotin + 2 5'-deoxyadenosine + 2 L-methionine + 2 oxidized [2Fe-2S]-[ferredoxin]. It functions in the pathway cofactor biosynthesis; biotin biosynthesis; biotin from 7,8-diaminononanoate: step 2/2. Catalyzes the conversion of dethiobiotin (DTB) to biotin by the insertion of a sulfur atom into dethiobiotin via a radical-based mechanism. This chain is Biotin synthase, found in Yersinia pestis bv. Antiqua (strain Antiqua).